Consider the following 769-residue polypeptide: Ligand-dependent nuclear receptor-interacting factor 1 (769 aa).

Glycyl lysine isopeptide (Lys-Gly) (interchain with G-Cter in SUMO2) cross-links involve residues lysine 259 and lysine 279. Residues glutamine 378–proline 387 are compositionally biased toward polar residues. A disordered region spans residues glutamine 378–serine 400. Serine 402, serine 430, and serine 436 each carry phosphoserine. Lysine 446 participates in a covalent cross-link: Glycyl lysine isopeptide (Lys-Gly) (interchain with G-Cter in SUMO2). The residue at position 502 (serine 502) is a Phosphoserine. The disordered stretch occupies residues aspartate 528–leucine 562. The short motif at leucine 580–leucine 584 is the PxVxL motif element. Serine 599 is subject to Phosphoserine. A Glycyl lysine isopeptide (Lys-Gly) (interchain with G-Cter in SUMO2) cross-link involves residue lysine 605. 2 consecutive short sequence motifs (nuclear localization signal) follow at residues lysine 628–lysine 631 and lysine 642–lysine 645. Lysine 702 is covalently cross-linked (Glycyl lysine isopeptide (Lys-Gly) (interchain with G-Cter in SUMO2)). At threonine 732 the chain carries Phosphothreonine. The stretch at isoleucine 740–lysine 769 forms a coiled coil.

This sequence belongs to the LRIF1 family. Interacts with RARA. Interacts with SMCHD1; leading to recruitment to inactivated chromosome X in females. Interacts (via PxVxL motif) with HP1 (CBX1/HP1-beta, CBX3/HP1-gamma and CBX5/HP1-alpha). Widely expressed, with the highest expression levels in heart, liver and placenta.

Its subcellular location is the chromosome. It localises to the nucleus matrix. Together with SMCHD1, involved in chromosome X inactivation in females by promoting the compaction of heterochromatin. Also able to repress the ligand-induced transcriptional activity of retinoic acid receptor alpha (RARA), possibly through direct recruitment of histone deacetylases. Also required for silencing of the DUX4 locus in somatic cells. The protein is Ligand-dependent nuclear receptor-interacting factor 1 of Homo sapiens (Human).